The sequence spans 95 residues: RING finger protein Z (95 aa).

Residues 1–17 show a composition bias toward polar residues; the sequence is MGNCNRTQKPSSSSNNL. Residues 1 to 25 form a disordered region; that stretch reads MGNCNRTQKPSSSSNNLEKPPQAAE. Glycine 2 is lipidated: N-myristoyl glycine; by host. The segment at 40–76 adopts an RING-type; atypical zinc-finger fold; it reads CKCCWFADKNLITCSDHYLCLRCHQIMLRNSELCNIC. The ASAP motif signature appears at 90-93; the sequence is ASAP.

Belongs to the arenaviridae Z protein family. Interacts with protein NP; this interaction probably directs the encapsidated genome to budding sites. Interacts (via RING domain) with polymerase L; this interaction inhibits viral transcription and replication, Z partially blocks the product exit tunnel for the releasing nascent RNA product. Interacts with the glycoprotein complex; this interaction plays a role in virion budding. Interacts with host eIF4E; this interaction results in eIF4E reduced affinity for its substrate, the 5'-m7 G cap structure. Interacts (via late-budding domain) with host TSG101; this interaction is essential for budding and release of viral particles. Interacts with host RPLP0; this interaction may serve to load ribosome-like particles inside the virion. Interacts with host PML; this interaction induces PML bodies redistribution in the cytoplasm upon viral infection. In terms of processing, myristoylation is required for the role of RING finger protein Z in assembly and budding.

It is found in the virion. The protein localises to the host cytoplasm. Its subcellular location is the host perinuclear region. The protein resides in the host cell membrane. Functionally, plays a crucial role in virion assembly and budding. Expressed late in the virus life cycle, it acts as an inhibitor of viral transcription and RNA synthesis by interacting with the viral polymerase L. Presumably recruits the NP encapsidated genome to cellular membranes at budding sites via direct interaction with NP. Plays critical roles in the final steps of viral release by interacting with host TSG101, a member of the vacuolar protein-sorting pathway and using other cellular host proteins involved in vesicle formation pathway. The budding of the virus progeny occurs after association of protein Z with the viral glycoprotein complex SSP-GP1-GP2 at the cell periphery, step that requires myristoylation of protein Z. Also selectively represses protein production by associating with host eIF4E. In cell-based minigenome assay, has an inhibitory effect on the ribonucleoprotein machinery (vRNP), which is responsible for the replication and transcription of the viral genome. In Tacaribe virus (strain Franze-Fernandez) (TCRV), this protein is RING finger protein Z.